The chain runs to 98 residues: Large ribosomal subunit protein uL23 (98 aa).

This sequence belongs to the universal ribosomal protein uL23 family. Part of the 50S ribosomal subunit. Contacts protein L29, and trigger factor when it is bound to the ribosome.

Its function is as follows. One of the early assembly proteins it binds 23S rRNA. One of the proteins that surrounds the polypeptide exit tunnel on the outside of the ribosome. Forms the main docking site for trigger factor binding to the ribosome. The protein is Large ribosomal subunit protein uL23 of Nitrobacter winogradskyi (strain ATCC 25391 / DSM 10237 / CIP 104748 / NCIMB 11846 / Nb-255).